Consider the following 558-residue polypeptide: Tyrosine N-monooxygenase (558 aa).

A helical transmembrane segment spans residues 13 to 33 (VLAAPLLSSSAILKLLLFVVT). Residues 48-67 (TTKCSSTTCASPPAGVGNPP) form a disordered region. Positions 49-65 (TKCSSTTCASPPAGVGN) are enriched in low complexity. Residues Arg-138, Arg-167, His-422, Arg-491, and Cys-493 each contribute to the heme b site.

This sequence belongs to the cytochrome P450 family. It depends on heme b as a cofactor.

The protein localises to the endoplasmic reticulum membrane. The catalysed reaction is L-tyrosine + 2 reduced [NADPH--hemoprotein reductase] + 2 O2 = (E)-4-hydroxyphenylacetaldehyde oxime + 2 oxidized [NADPH--hemoprotein reductase] + CO2 + 3 H2O + 2 H(+). The enzyme catalyses L-tyrosine + reduced [NADPH--hemoprotein reductase] + O2 = N-hydroxy-L-tyrosine + oxidized [NADPH--hemoprotein reductase] + H2O + 2 H(+). It carries out the reaction N-hydroxy-L-tyrosine + reduced [NADPH--hemoprotein reductase] + O2 = N,N-dihydroxy-L-tyrosine + oxidized [NADPH--hemoprotein reductase] + H2O + H(+). It catalyses the reaction N,N-dihydroxy-L-tyrosine + H(+) = (E)-4-hydroxyphenylacetaldehyde oxime + CO2 + H2O. The protein operates within secondary metabolite biosynthesis; dhurrin biosynthesis; dhurrin from L-tyrosine: step 1/3. Functionally, cytochrome P450 involved in the biosynthesis of the cyanogenic glucoside dhurrin. Catalyzes the conversion of L-tyrosine to p-hydroxyphenylacetaldehyde oxime, via the N-hydroxy-L-tyrosine and N,N-dihydroxy-L-tyrosine intermediates. Produces the (E) isomer of the final oxime product. The sequence is that of Tyrosine N-monooxygenase (CYP79A1) from Sorghum bicolor (Sorghum).